A 602-amino-acid chain; its full sequence is Zinc finger MYND domain-containing protein 11 (602 aa).

Residues 6-82 (KRRQADTKAI…CKGSKAGIEQ (77 aa)) form the SAMD1-like winged helix (WH) domain. The PHD-type zinc-finger motif lies at 100 to 148 (DWYCFECHLPGEVLICDLCFRVYHSKCLSDEFRLRDSSSPWQCPVCRSI). The Bromo domain occupies 149-255 (KKKNTNKQEM…KDTCHELDEL (107 aa)). Residues cysteine 258, cysteine 261, cysteine 277, and histidine 281 each contribute to the Zn(2+) site. In terms of domain architecture, PWWP spans 280–331 (NHELVWAKMKGFGFWPAKVMQKEDNQVDVRFFGHHHQRAWIPSENIQDITVN). A Glycyl lysine isopeptide (Lys-Gly) (interchain with G-Cter in SUMO2) cross-link involves residue lysine 366. Residues 366–459 (KNEDRGEEEA…MLHRSTQTTN (94 aa)) are disordered. The short motif at 394 to 400 (RAKKGRR) is the Nuclear localization signal element. Residues lysine 407 and lysine 408 each participate in a glycyl lysine isopeptide (Lys-Gly) (interchain with G-Cter in SUMO2) cross-link. Serine 421 bears the Phosphoserine mark. Residues 435–459 (SVSTQTKKLSASSPRMLHRSTQTTN) show a composition bias toward polar residues. Residues 452-572 (HRSTQTTNDG…CYNCEEEAMY (121 aa)) form an interaction with human adenovirus E1A region. Zn(2+) is bound by residues cysteine 563, cysteine 566, cysteine 574, cysteine 575, cysteine 581, cysteine 585, histidine 594, and cysteine 598. An MYND-type zinc finger spans residues 563-598 (CYNCEEEAMYHCCWNTSYCSIKCQQEHWHAEHKRTC).

Homooligomer; forms homooligomers via its C-terminus. Interacts with histone H3.3 trimethylated at 'Lys-36' (H3.3K36me3). Interacts (via MYND-type zinc finger) with NCOR1. Interacts (via MYND-type zinc finger) with MGA protein (via PXLXP motif). Interacts (via MYND-type zinc finger) with EZH2. Interacts with EMSY and E2F6. Interacts with PIAS1 and UBE2I. In terms of assembly, (Microbial infection) Interacts (via MYND-type zinc finger) with human adenovirus early E1A protein (via PXLXP motif); this interaction inhibits E1A mediated transactivation. As to quaternary structure, (Microbial infection) Interacts (via MYND-type zinc finger) with Epstein-Barr virus EBNA2 protein (via PXLXP motif). Interacts with Epstein-Barr virus-derived protein LMP1; leading to negatively regulate NF-kappa-B activation by Epstein-Barr virus-derived protein LMP1. Sumoylated following its interaction with PIAS1 and UBE2I. In terms of processing, ubiquitinated, leading to proteasomal degradation. Ubiquitous.

It localises to the nucleus. Its subcellular location is the chromosome. Its function is as follows. Chromatin reader that specifically recognizes and binds histone H3.3 trimethylated at 'Lys-36' (H3.3K36me3) and regulates RNA polymerase II elongation. Does not bind other histone H3 subtypes (H3.1 or H3.2). Colocalizes with highly expressed genes and functions as a transcription corepressor by modulating RNA polymerase II at the elongation stage. Binds non-specifically to dsDNA. Acts as a tumor-suppressor by repressing a transcriptional program essential for tumor cell growth. Functionally, (Microbial infection) Inhibits Epstein-Barr virus EBNA2-mediated transcriptional activation and host cell proliferation, through direct interaction. The chain is Zinc finger MYND domain-containing protein 11 from Homo sapiens (Human).